Here is a 406-residue protein sequence, read N- to C-terminus: MSATMAEYQSSTSRRYDTQIHRRVTRTVNVGGVLIGSDHPVRVQSMINEDTLDVEGATAGIRRLHEAGCEIVRLTVPSLGHAKAVGEICQRLRETYQPVPLVADVHHNGMKIALEVANHVDKVRINPGLFVFDKADPDRTEFSGEEIASIRERIAENFEPLVTRLKQQDKALRIGVNHGSLAERMLFAYGDTPLGMVESAMEFVRICDSLDFHNIVISMKASRAPVMLAAYRLMADTMDQEGFNYPLHLGVTEAGDGDYGRIKSTAGIATLLAEGLGDTIRVSLTEAPEKEIPVCYSILQSIGLRKTMVEYISCPSCGRTLFNLEEVVQKVRDSTSHLVGLDIAVMGCIVNGPGEMADADYGYVGKGPGVISLYRGRDEIRKVSESEGVDALIQLIKDDGRWVDPP.

Positions 314, 317, 348, and 355 each coordinate [4Fe-4S] cluster.

This sequence belongs to the IspG family. Requires [4Fe-4S] cluster as cofactor.

It carries out the reaction (2E)-4-hydroxy-3-methylbut-2-enyl diphosphate + 2 oxidized [2Fe-2S]-[ferredoxin] + H2O = 2-C-methyl-D-erythritol 2,4-cyclic diphosphate + 2 reduced [2Fe-2S]-[ferredoxin] + H(+). Its pathway is isoprenoid biosynthesis; isopentenyl diphosphate biosynthesis via DXP pathway; isopentenyl diphosphate from 1-deoxy-D-xylulose 5-phosphate: step 5/6. Its function is as follows. Converts 2C-methyl-D-erythritol 2,4-cyclodiphosphate (ME-2,4cPP) into 1-hydroxy-2-methyl-2-(E)-butenyl 4-diphosphate. The polypeptide is 4-hydroxy-3-methylbut-2-en-1-yl diphosphate synthase (ferredoxin) (Prochlorococcus marinus (strain MIT 9313)).